The following is a 270-amino-acid chain: L-fucose dehydrogenase (270 aa).

Arginine 19, isoleucine 21, aspartate 40, lysine 41, aspartate 62, valine 63, asparagine 89, tyrosine 154, lysine 158, isoleucine 187, threonine 189, and leucine 191 together coordinate NAD(+). The active-site Proton acceptor is tyrosine 154.

The protein belongs to the short-chain dehydrogenases/reductases (SDR) family. As to quaternary structure, homotetramer. In terms of tissue distribution, highly expressed in brain, placenta, liver and kidney.

The protein localises to the cytoplasm. It carries out the reaction L-fucose + NAD(+) = L-fucono-1,5-lactone + NADH + H(+). The catalysed reaction is D-arabinose + NAD(+) = D-arabinono-1,5-lactone + NADH + H(+). The enzyme catalyses L-galactose + NAD(+) = L-galactono-1,5-lactone + NADH + H(+). It functions in the pathway carbohydrate degradation; L-fucose degradation. In terms of biological role, catalyzes the NAD(+)-dependent oxidation of L-fucose, yielding L-fucono-1,5-lactone, which rapidly converts spontaneously to L-fucone-1,4-lactone. Can also act on D-arabinose and L-galactose, with lower catalytic efficiency. Does not use NADPH. May be the initial enzyme of the L-fucose degradation pathway in mammals. The polypeptide is L-fucose dehydrogenase (Homo sapiens (Human)).